A 466-amino-acid polypeptide reads, in one-letter code: E3 SUMO-protein ligase TRIM60 (466 aa).

Residues 15 to 56 form an RING-type zinc finger; it reads CYICSDFMEDPVTSRCGHNFCFACLRLLWDDLQGNIFCPVCQ. The segment at 91 to 132 adopts a B box-type zinc-finger fold; it reads EEHTVCPKHDQPLVLFCVRDRDVLCTQCSLSVEHQGHYTCPI. Residues Cys-96, His-99, Cys-118, and His-124 each coordinate Zn(2+). Residues 171–223 are a coiled coil; that stretch reads LREEAQYQKIEIRYEIGQIKLFLQSEYEAHLNESHMEELRSFSELNGYLETLL. In terms of domain architecture, B30.2/SPRY spans 272–462; it reads LSLPAQYSGL…LEILTHPTPD (191 aa).

Belongs to the TRIM/RBCC family.

Its function is as follows. E3 SUMO-protein ligase that mediates SUMOylation of TAB2 leading to inhibition of NF-kappa-B and MAPK pathways by suppressing the TRAF6/TAB2/TAK1 complex. This chain is E3 SUMO-protein ligase TRIM60 (Trim60), found in Mus musculus (Mouse).